The chain runs to 238 residues: Probable RNA/DNA demethylase ALKBH6 (238 aa).

In terms of domain architecture, Fe2OG dioxygenase spans proline 96–proline 227. 2-oxoglutarate contacts are provided by asparagine 103 and tyrosine 105. Fe cation is bound by residues histidine 114 and aspartate 116. The tract at residues tyrosine 138–serine 161 is disordered. Residue histidine 182 coordinates Fe cation. 2-oxoglutarate-binding residues include arginine 218 and serine 220.

This sequence belongs to the alkB family. Interacts with VCPKMT. It depends on Fe(2+) as a cofactor. As to expression, widely expressed, with highest expression in testis and pancreas.

The protein resides in the cytoplasm. It localises to the nucleus. Probable Fe(2+)/2-oxoglutarate-dependent dioxygenase involved in oxidative demethylation of nucleic acids. Binds nucleic acids with a preference for ssDNA or ssRNA to other types of DNAs. May play a role in nucleic acid damage repair. This Homo sapiens (Human) protein is Probable RNA/DNA demethylase ALKBH6.